The chain runs to 113 residues: B-type lectin plumieribetin (113 aa).

The Bulb-type lectin domain occupies 1–109 (NYLSKNDELR…STEIWNSDKN (109 aa)).

In terms of assembly, homotetramer. Interacts with alpha-1-beta-1 integrin (ITGA1/ITGB1). Post-translationally, not glycosylated. Not N-glycosylated and not O-glycosylated with the mostcommon O-linked glycoconjugates. In terms of processing, the N-terminus is blocked. In terms of tissue distribution, expressed by sting venom glands and is also found in skin mucus. Not found in other tissues tested.

The protein localises to the secreted. Its function is as follows. May contribute to some of the local and systemic effects of envenomation by the scorpionfish. Preferentially recognizes mannose-containing carbohydrate structures, but its interaction with single mannose residues is weak. Potently inhibits alpha-1-beta-1 integrin (ITGA1/ITGB1) binding to basement membrane collagen IV in a divalent cation-independent manner. In addition, moderately inhibits both laminin binding integrins alpha-3-beta-1 (ITGA3/ITGB1) and alpha-7-beta-1 (ITGA7/ITGB1). Weakens the cell-collagen contacts, reduces cell spreading, and alters the actin cytoskeleton, after the compensating alpha-2-beta-1 integrin is blocked. On the cellular level, fails to completely detach hepatocarcinoma HepG2 cells and primary arterial smooth muscle cells from the collagen IV fragment CB3. This chain is B-type lectin plumieribetin, found in Scorpaena plumieri (Spotted scorpionfish).